The sequence spans 353 residues: Cyclic GMP-AMP synthase-like receptor (353 aa).

Residues S60 and 72 to 74 (EYD) each bind ATP. Mg(2+)-binding residues include E72, D74, and D183. GTP is bound at residue D183. K245 provides a ligand contact to ATP. Mn(2+) is bound by residues L269 and E270.

The protein belongs to the mab-21 family. The cofactor is Mg(2+). It depends on Mn(2+) as a cofactor.

It carries out the reaction GTP + ATP = 2',3'-cGAMP + 2 diphosphate. It catalyses the reaction GTP + ATP = pppGp(2'-5')A + diphosphate. The enzyme catalyses pppGp(2'-5')A = 2',3'-cGAMP + diphosphate. Nucleotidyltransferase that catalyzes the formation of cyclic GMP-AMP (2',3'-cGAMP) from ATP and GTP and plays a key role in innate immunity. Acts as a key sensor of double-stranded RNA (dsRNA), the presence of dsRNA in the cytoplasm being a danger signal that triggers the immune responses. Directly binds dsRNA, activating the nucleotidyltransferase activity, leading to synthesis of 2',3'-cGAMP, a second messenger that binds to and activates Sting, thereby triggering the immune response via activation of the NF-kappa-B transcription factor. In Nicrophorus vespilloides (Boreal carrion beetle), this protein is Cyclic GMP-AMP synthase-like receptor.